Reading from the N-terminus, the 106-residue chain is L-rhamnose mutarotase (106 aa).

Tyrosine 20 contributes to the substrate binding site. Histidine 24 functions as the Proton donor in the catalytic mechanism. Substrate-binding positions include tyrosine 43 and 78–79 (WW).

This sequence belongs to the rhamnose mutarotase family. Homodimer.

It localises to the cytoplasm. It catalyses the reaction alpha-L-rhamnose = beta-L-rhamnose. Its pathway is carbohydrate metabolism; L-rhamnose metabolism. In terms of biological role, involved in the anomeric conversion of L-rhamnose. This is L-rhamnose mutarotase from Verminephrobacter eiseniae (strain EF01-2).